The primary structure comprises 439 residues: Ribosomal protein uS12 methylthiotransferase RimO (439 aa).

Residues lysine 3–proline 118 enclose the MTTase N-terminal domain. 6 residues coordinate [4Fe-4S] cluster: cysteine 12, cysteine 48, cysteine 81, cysteine 157, cysteine 161, and cysteine 164. The region spanning asparagine 143–glutamate 370 is the Radical SAM core domain. One can recognise a TRAM domain in the interval glutamate 373–serine 438.

This sequence belongs to the methylthiotransferase family. RimO subfamily. [4Fe-4S] cluster is required as a cofactor.

It is found in the cytoplasm. It carries out the reaction L-aspartate(89)-[ribosomal protein uS12]-hydrogen + (sulfur carrier)-SH + AH2 + 2 S-adenosyl-L-methionine = 3-methylsulfanyl-L-aspartate(89)-[ribosomal protein uS12]-hydrogen + (sulfur carrier)-H + 5'-deoxyadenosine + L-methionine + A + S-adenosyl-L-homocysteine + 2 H(+). Its function is as follows. Catalyzes the methylthiolation of an aspartic acid residue of ribosomal protein uS12. The chain is Ribosomal protein uS12 methylthiotransferase RimO from Leptospira borgpetersenii serovar Hardjo-bovis (strain L550).